The chain runs to 238 residues: tRNA (guanine-N(7)-)-methyltransferase (238 aa).

Residues E68, E93, D120, and D143 each contribute to the S-adenosyl-L-methionine site. Residue D143 is part of the active site. Substrate contacts are provided by residues K147, D179, and 216-219 (TKFE).

It belongs to the class I-like SAM-binding methyltransferase superfamily. TrmB family.

The catalysed reaction is guanosine(46) in tRNA + S-adenosyl-L-methionine = N(7)-methylguanosine(46) in tRNA + S-adenosyl-L-homocysteine. It functions in the pathway tRNA modification; N(7)-methylguanine-tRNA biosynthesis. Functionally, catalyzes the formation of N(7)-methylguanine at position 46 (m7G46) in tRNA. This Shewanella putrefaciens (strain CN-32 / ATCC BAA-453) protein is tRNA (guanine-N(7)-)-methyltransferase.